Consider the following 372-residue polypeptide: ATP phosphoribosyltransferase regulatory subunit (372 aa).

The protein belongs to the class-II aminoacyl-tRNA synthetase family. HisZ subfamily. In terms of assembly, heteromultimer composed of HisG and HisZ subunits.

The protein resides in the cytoplasm. It participates in amino-acid biosynthesis; L-histidine biosynthesis; L-histidine from 5-phospho-alpha-D-ribose 1-diphosphate: step 1/9. Its function is as follows. Required for the first step of histidine biosynthesis. May allow the feedback regulation of ATP phosphoribosyltransferase activity by histidine. This Rhizobium rhizogenes (strain K84 / ATCC BAA-868) (Agrobacterium radiobacter) protein is ATP phosphoribosyltransferase regulatory subunit.